A 62-amino-acid chain; its full sequence is Alpha-conotoxin-like Bn1.3 (62 aa).

The N-terminal stretch at 1-18 (MGMRMMFTVFLLVVLATA) is a signal peptide. Positions 19–48 (VLPVTLDRASDGRNAAANAKTPRLIAPFIR) are excised as a propeptide. 2 cysteine pairs are disulfide-bonded: Cys-51/Cys-57 and Cys-52/Cys-61. Position 61 is a cysteine amide (Cys-61).

This sequence belongs to the conotoxin A superfamily. As to expression, expressed by the venom duct.

The protein localises to the secreted. In terms of biological role, does not show activity on the acetylcholine receptors tested. In Conus bandanus (Banded marble cone), this protein is Alpha-conotoxin-like Bn1.3.